The following is a 195-amino-acid chain: E3 ubiquitin-protein ligase ZNRF1 (195 aa).

Residues 1 to 10 (MGGKQSSASR) are compositionally biased toward polar residues. Residues 1-37 (MGGKQSSASRSRAPFPGVSSDDSAVPPSSNFGHFRGG) are disordered. Gly-2 is lipidated: N-myristoyl glycine. Low complexity predominate over residues 18–29 (VSSDDSAVPPSS). The segment at 152–193 (CVICLEELSQGDTIARLPCLCIYHKSCIDSWFEVNRCCPEHP) adopts an RING-type; atypical zinc-finger fold.

It localises to the endosome. The protein localises to the lysosome. It is found in the membrane. It carries out the reaction S-ubiquitinyl-[E2 ubiquitin-conjugating enzyme]-L-cysteine + [acceptor protein]-L-lysine = [E2 ubiquitin-conjugating enzyme]-L-cysteine + N(6)-ubiquitinyl-[acceptor protein]-L-lysine.. It participates in protein modification; protein ubiquitination. E3 ubiquitin-protein ligase that plays a role in neuron cells differentiation. Plays a role in the establishment and maintenance of neuronal transmission and plasticity. This is E3 ubiquitin-protein ligase ZNRF1 (znrf1) from Xenopus laevis (African clawed frog).